The chain runs to 307 residues: NmrA-like family domain-containing oxidoreductase flvB (307 aa).

Residues 4–9 (LITGAT), 32–36 (SSSSP), 53–54 (DY), 74–76 (STN), and 148–151 (YVEG) contribute to the NADP(+) site.

It belongs to the NmrA-type oxidoreductase family.

The catalysed reaction is (2S)-5,5-dimethyl-2,3,4,5-tetrahydropyridine-2,6-dicarboxylate + NADPH + 2 H(+) = (6S)-3,3-dimethylpiperidine-2,6-dicarboxylate + NADP(+). The enzyme catalyses (2S)-5,5-dimethyl-2,3,4,5-tetrahydropyridine-2,6-dicarboxylate + NADH + 2 H(+) = (6S)-3,3-dimethylpiperidine-2,6-dicarboxylate + NAD(+). It functions in the pathway secondary metabolite biosynthesis; terpenoid biosynthesis. In terms of biological role, nmrA-like family domain-containing oxidoreductase; part of the gene cluster that mediates the biosynthesis of flavunoidine, an alkaloidal terpenoid with a tetracyclic cage-like core connected to dimethylcadaverine via a C-N bond and acylated with 5,5-dimethyl-L-pipecolate. The tetracyclic core is synthesized by the terpene cyclase flvE and the cytochrome P450 monooxygenase flvD. The terpene cyclase flvE catalyzes the cyclization of farnesyl pyrophosphate (FPP) to form (1R,4R,5S)-(+)-acoradiene and the cytochrome P450 monooxygenase flvD is then responsible for oxidative conversion of (1R,4R,5S)-(+)-acoradiene into the tetracyclic cage present in the final product flavunoidine. In parallel, the N-methyltransferase flvH dimethylates L-lysine to give N,N-dimethyl-L-Lysin which is decarboxylated by flvG to afford dimethylcadaverine. The terpene cyclase-like protein flvF is the enzyme that attaches the dimethylcadaverine precusor at the C-7 of the tetracyclic cage to yield pre-flavunoidine. The cytochrome monooxygenase flvC hydroxylates the C-10 position of pre-flavunoidine whereas the NRPS flvI acylates the terpenoid core at the hydroxylated C-10 with dimethylpipecolate to yield final flavunoidine. The bifunctional enzyme flvA and the dehydrogenase flvB are responsible for the synthesis of the dimethylpipecolate precursor. The PLP-dependent lyase domain of flvA might use L-O-acetyl-homoserine and alpha-keto-isovalerate to form an intermediary ketone that can cyclize intramolecularly to yield an imine. The imine can be reduced by flvB to yield the 6-carboxylated pipecolate. The C-terminal alpha-KG-dependent oxygenase domain of flvA is then proposed to catalyze the decarboxylation to yield dimethylpipecolate. This chain is NmrA-like family domain-containing oxidoreductase flvB, found in Aspergillus flavus (strain ATCC 200026 / FGSC A1120 / IAM 13836 / NRRL 3357 / JCM 12722 / SRRC 167).